The sequence spans 581 residues: Probable peptidoglycan D,D-transpeptidase PenA (581 aa).

A helical membrane pass occupies residues 28 to 48; sequence ISFVLMAMAVLFACLIARGLY. Serine 310 (acyl-ester intermediate) is an active-site residue.

The protein belongs to the transpeptidase family. FtsI subfamily.

The protein resides in the cell inner membrane. The catalysed reaction is Preferential cleavage: (Ac)2-L-Lys-D-Ala-|-D-Ala. Also transpeptidation of peptidyl-alanyl moieties that are N-acyl substituents of D-alanine.. The protein operates within cell wall biogenesis; peptidoglycan biosynthesis. Functionally, catalyzes cross-linking of the peptidoglycan cell wall at the division septum. This chain is Probable peptidoglycan D,D-transpeptidase PenA, found in Neisseria gonorrhoeae.